The chain runs to 62 residues: UPF0434 protein Tola_2233 (62 aa).

This sequence belongs to the UPF0434 family.

This chain is UPF0434 protein Tola_2233, found in Tolumonas auensis (strain DSM 9187 / NBRC 110442 / TA 4).